A 402-amino-acid chain; its full sequence is BTB and MATH domain-containing protein 40 (402 aa).

The disordered stretch occupies residues 1-25; that stretch reads MSDRHLYGSDHSYLSSKPSCSSCRR. Residues 15–25 are compositionally biased toward low complexity; that stretch reads SSKPSCSSCRR. Residues 43–177 form the MATH domain; sequence VLTQRWTVCN…DKSLVISCHI (135 aa). Residues 222–295 enclose the BTB domain; it reads TDMTIVAGPL…IYAGVIKSDI (74 aa).

As to quaternary structure, interacts with cul-3.

Its pathway is protein modification; protein ubiquitination. Probable substrate-specific adapter of an E3 ubiquitin-protein ligase complex which mediates the ubiquitination and subsequent proteasomal degradation of target proteins. The protein is BTB and MATH domain-containing protein 40 (bath-40) of Caenorhabditis elegans.